Here is a 371-residue protein sequence, read N- to C-terminus: Protein STRICTOSIDINE SYNTHASE-LIKE 7 (371 aa).

The signal sequence occupies residues 1-25 (MPVLFSSRSLILSIIVPLLISIALY). N-linked (GlcNAc...) asparagine glycans are attached at residues Asn101, Asn137, and Asn285. Tyr303 carries the post-translational modification Phosphotyrosine.

It belongs to the strictosidine synthase family.

The protein localises to the vacuole. The polypeptide is Protein STRICTOSIDINE SYNTHASE-LIKE 7 (Arabidopsis thaliana (Mouse-ear cress)).